The sequence spans 347 residues: Cell shape-determining protein MreB (347 aa).

ATP contacts are provided by residues 19–21 (TAN), 168–170 (GGT), 216–219 (ERIK), and 296–299 (GGAL).

This sequence belongs to the FtsA/MreB family. In terms of assembly, forms polymers.

It localises to the cytoplasm. Its function is as follows. Forms membrane-associated dynamic filaments that are essential for cell shape determination. Acts by regulating cell wall synthesis and cell elongation, and thus cell shape. A feedback loop between cell geometry and MreB localization may maintain elongated cell shape by targeting cell wall growth to regions of negative cell wall curvature. The sequence is that of Cell shape-determining protein MreB from Escherichia coli O6:H1 (strain CFT073 / ATCC 700928 / UPEC).